Consider the following 292-residue polypeptide: Shikimate dehydrogenase (NADP(+)) (292 aa).

Shikimate-binding positions include 22-24 and serine 69; that span reads SLS. Lysine 73 acts as the Proton acceptor in catalysis. The shikimate site is built by asparagine 94 and aspartate 111. NADP(+)-binding positions include 135–139 and isoleucine 236; that span reads GVGGA. Tyrosine 238 provides a ligand contact to shikimate. Glycine 260 contacts NADP(+).

The protein belongs to the shikimate dehydrogenase family. As to quaternary structure, homodimer.

It catalyses the reaction shikimate + NADP(+) = 3-dehydroshikimate + NADPH + H(+). The protein operates within metabolic intermediate biosynthesis; chorismate biosynthesis; chorismate from D-erythrose 4-phosphate and phosphoenolpyruvate: step 4/7. Involved in the biosynthesis of the chorismate, which leads to the biosynthesis of aromatic amino acids. Catalyzes the reversible NADPH linked reduction of 3-dehydroshikimate (DHSA) to yield shikimate (SA). The chain is Shikimate dehydrogenase (NADP(+)) from Streptococcus pyogenes serotype M3 (strain ATCC BAA-595 / MGAS315).